The following is a 633-amino-acid chain: tRNA uridine 5-carboxymethylaminomethyl modification enzyme MnmG (633 aa).

13-18 (GGGHAG) lines the FAD pocket. 273 to 287 (GPRYCPSIEDKINRF) contacts NAD(+).

The protein belongs to the MnmG family. As to quaternary structure, homodimer. Heterotetramer of two MnmE and two MnmG subunits. The cofactor is FAD.

The protein localises to the cytoplasm. Functionally, NAD-binding protein involved in the addition of a carboxymethylaminomethyl (cmnm) group at the wobble position (U34) of certain tRNAs, forming tRNA-cmnm(5)s(2)U34. In Pseudoalteromonas atlantica (strain T6c / ATCC BAA-1087), this protein is tRNA uridine 5-carboxymethylaminomethyl modification enzyme MnmG.